The chain runs to 261 residues: Cytochrome c oxidase subunit 3 (261 aa).

The Mitochondrial matrix portion of the chain corresponds to 1-15; the sequence is MTHQTHAYHMVDPSP. Residues 16–34 form a helical membrane-spanning segment; that stretch reads WPLTGALSALLMTSGLTMW. The Mitochondrial intermembrane segment spans residues 35-40; it reads FHYHSV. A helical transmembrane segment spans residues 41–66; that stretch reads VLLFLGLMTNTLTMFQWWRDVVREGT. The Mitochondrial matrix portion of the chain corresponds to 67 to 72; that stretch reads FQGHHT. Residues 73–105 traverse the membrane as a helical segment; the sequence is PVVQEGLRYGMILFITSEVLFFTGFFWAFYHSS. Topologically, residues 106-128 are mitochondrial intermembrane; it reads LAPTPELGSYWPPVGVYPLNPLE. A helical membrane pass occupies residues 129–152; that stretch reads VPLLNTSVLLASGVTITWAHHSLM. The Mitochondrial matrix portion of the chain corresponds to 153 to 155; the sequence is EGN. The helical transmembrane segment at 156–183 threads the bilayer; sequence RKNMLQALLITILLGVYFTLLQMFEYYE. Topologically, residues 184 to 190 are mitochondrial intermembrane; sequence ASFTISD. The helical transmembrane segment at 191-223 threads the bilayer; that stretch reads GIYGSTFFVTTGFHGLHVIIGSTFLLTCFIRQL. Residues 224–232 lie on the Mitochondrial matrix side of the membrane; it reads KFHFTSNHH. A helical transmembrane segment spans residues 233 to 256; that stretch reads FGFEAAAWYWHFVDVVWLFLYLSI. The Mitochondrial intermembrane segment spans residues 257–261; the sequence is YWWGS.

It belongs to the cytochrome c oxidase subunit 3 family. In terms of assembly, component of the cytochrome c oxidase (complex IV, CIV), a multisubunit enzyme composed of 14 subunits. The complex is composed of a catalytic core of 3 subunits MT-CO1, MT-CO2 and MT-CO3, encoded in the mitochondrial DNA, and 11 supernumerary subunits COX4I, COX5A, COX5B, COX6A, COX6B, COX6C, COX7A, COX7B, COX7C, COX8 and NDUFA4, which are encoded in the nuclear genome. The complex exists as a monomer or a dimer and forms supercomplexes (SCs) in the inner mitochondrial membrane with NADH-ubiquinone oxidoreductase (complex I, CI) and ubiquinol-cytochrome c oxidoreductase (cytochrome b-c1 complex, complex III, CIII), resulting in different assemblies (supercomplex SCI(1)III(2)IV(1) and megacomplex MCI(2)III(2)IV(2)).

The protein resides in the mitochondrion inner membrane. The catalysed reaction is 4 Fe(II)-[cytochrome c] + O2 + 8 H(+)(in) = 4 Fe(III)-[cytochrome c] + 2 H2O + 4 H(+)(out). In terms of biological role, component of the cytochrome c oxidase, the last enzyme in the mitochondrial electron transport chain which drives oxidative phosphorylation. The respiratory chain contains 3 multisubunit complexes succinate dehydrogenase (complex II, CII), ubiquinol-cytochrome c oxidoreductase (cytochrome b-c1 complex, complex III, CIII) and cytochrome c oxidase (complex IV, CIV), that cooperate to transfer electrons derived from NADH and succinate to molecular oxygen, creating an electrochemical gradient over the inner membrane that drives transmembrane transport and the ATP synthase. Cytochrome c oxidase is the component of the respiratory chain that catalyzes the reduction of oxygen to water. Electrons originating from reduced cytochrome c in the intermembrane space (IMS) are transferred via the dinuclear copper A center (CU(A)) of subunit 2 and heme A of subunit 1 to the active site in subunit 1, a binuclear center (BNC) formed by heme A3 and copper B (CU(B)). The BNC reduces molecular oxygen to 2 water molecules using 4 electrons from cytochrome c in the IMS and 4 protons from the mitochondrial matrix. This chain is Cytochrome c oxidase subunit 3 (MT-CO3), found in Mammuthus primigenius (Siberian woolly mammoth).